The chain runs to 355 residues: MEFFESAFWTGFLWPLIIMVAESVLVLVVLLVAIAYILLADRKIWAAVQIRRGPNVVGPWGLLQSFADLLKFVLKEPIIPAGANKGVFLLAPLVSCVLALAAWAVIPTNLGWVISDINVGILFIFAISSLSIYGIIMAGWSSNSKYPFLAALRSAAQMVSYEVSIGFVIITVLLCAGTLNLSAVVEAQHVRGLASLIGLPQLTILNWYVWPLFPMFVVFYVSALAETNRPPFDLVEAESELVAGFMVEYGSTPYLLFMLGEYVAIVTMCAMATILFLGGWLPPVDLPPFNWVPGIIWFLLKVFFMFFLFAMAKAIVPRYRYDQLMRLGWKVFLPLSLAMVIVVAGVLHFAGIAPK.

A run of 8 helical transmembrane segments spans residues 17–37, 86–106, 119–139, 165–185, 204–224, 262–282, 291–311, and 332–352; these read IIMV…IAYI, GVFL…WAVI, VGIL…IMAG, IGFV…SAVV, ILNW…VSAL, YVAI…GWLP, WVPG…LFAM, and FLPL…FAGI.

The protein belongs to the complex I subunit 1 family. As to quaternary structure, NDH-1 is composed of 14 different subunits. Subunits NuoA, H, J, K, L, M, N constitute the membrane sector of the complex.

It localises to the cell inner membrane. The enzyme catalyses a quinone + NADH + 5 H(+)(in) = a quinol + NAD(+) + 4 H(+)(out). NDH-1 shuttles electrons from NADH, via FMN and iron-sulfur (Fe-S) centers, to quinones in the respiratory chain. The immediate electron acceptor for the enzyme in this species is believed to be ubiquinone. Couples the redox reaction to proton translocation (for every two electrons transferred, four hydrogen ions are translocated across the cytoplasmic membrane), and thus conserves the redox energy in a proton gradient. This subunit may bind ubiquinone. This chain is NADH-quinone oxidoreductase subunit H, found in Bradyrhizobium diazoefficiens (strain JCM 10833 / BCRC 13528 / IAM 13628 / NBRC 14792 / USDA 110).